A 130-amino-acid chain; its full sequence is Small ribosomal subunit protein uS8 (130 aa).

The protein belongs to the universal ribosomal protein uS8 family. Part of the 30S ribosomal subunit. Contacts proteins S5 and S12.

Its function is as follows. One of the primary rRNA binding proteins, it binds directly to 16S rRNA central domain where it helps coordinate assembly of the platform of the 30S subunit. The protein is Small ribosomal subunit protein uS8 of Pseudomonas fluorescens (strain Pf0-1).